Here is a 239-residue protein sequence, read N- to C-terminus: Serine protease SplF (239 aa).

An N-terminal signal peptide occupies residues 1–36 (MNKNIIIKSIAALTILTSITGVGTTVVDGIQQTAKA). Residues His-75, Asp-114, and Ser-192 each act as charge relay system in the active site.

It belongs to the peptidase S1B family.

It localises to the secreted. The protein is Serine protease SplF (splF) of Staphylococcus aureus (strain MSSA476).